A 215-amino-acid polypeptide reads, in one-letter code: Pyrrolidone-carboxylate peptidase (215 aa).

Catalysis depends on residues E80, C143, and H167.

Belongs to the peptidase C15 family. In terms of assembly, homotetramer.

Its subcellular location is the cytoplasm. The catalysed reaction is Release of an N-terminal pyroglutamyl group from a polypeptide, the second amino acid generally not being Pro.. Functionally, removes 5-oxoproline from various penultimate amino acid residues except L-proline. The sequence is that of Pyrrolidone-carboxylate peptidase from Bacillus cereus (strain ATCC 10987 / NRS 248).